We begin with the raw amino-acid sequence, 76 residues long: Large ribosomal subunit protein uL24 (76 aa).

It belongs to the universal ribosomal protein uL24 family. As to quaternary structure, part of the 50S ribosomal subunit.

In terms of biological role, one of two assembly initiator proteins, it binds directly to the 5'-end of the 23S rRNA, where it nucleates assembly of the 50S subunit. One of the proteins that surrounds the polypeptide exit tunnel on the outside of the subunit. The chain is Large ribosomal subunit protein uL24 from Campylobacter hominis (strain ATCC BAA-381 / DSM 21671 / CCUG 45161 / LMG 19568 / NCTC 13146 / CH001A).